The chain runs to 474 residues: Alanine/serine racemase (474 aa).

Pyridoxal 5'-phosphate-binding positions include 139–140 and Gln282; that span reads GS. Position 308 is an N6-(pyridoxal phosphate)lysine (Lys308). Thr336 serves as a coordination point for pyridoxal 5'-phosphate.

Belongs to the class-III pyridoxal-phosphate-dependent aminotransferase family. In terms of assembly, homohexamer. Requires pyridoxal 5'-phosphate as cofactor.

It catalyses the reaction L-alanine = D-alanine. The enzyme catalyses L-serine = D-serine. Its activity is regulated as follows. Completely inhibited by hydroxylamine hydrochloride. Functionally, catalyzes the interconversion of L-alanine and D-alanine, and L-serine and D-serine. Has weak activity with valine and threonine. This chain is Alanine/serine racemase, found in Pyrococcus horikoshii (strain ATCC 700860 / DSM 12428 / JCM 9974 / NBRC 100139 / OT-3).